The sequence spans 886 residues: Cytosolic carboxypeptidase-like protein 5 (886 aa).

The Peptidase M14 domain maps to Tyr-157–Ala-570. The Zn(2+) site is built by His-252 and Glu-255. Over residues Ala-344 to Thr-353 the composition is skewed to polar residues. Disordered stretches follow at residues Ala-344–Ser-363 and Glu-374–Pro-401. His-434 contributes to the Zn(2+) binding site. The active-site Proton donor/acceptor is the Glu-516. 2 disordered regions span residues Gly-602–Gly-737 and Thr-783–Ser-846. Residues Pro-621 to Ala-635 are compositionally biased toward polar residues. Residues Ser-643–Ser-654 are compositionally biased toward low complexity. Residues Gln-655 to Ser-666 are compositionally biased toward polar residues. A compositionally biased stretch (low complexity) spans Ser-714–Gly-737. The segment covering Ser-805–Arg-815 has biased composition (polar residues). Residue Ser-841 is modified to Phosphoserine.

Belongs to the peptidase M14 family. It depends on Zn(2+) as a cofactor. In terms of tissue distribution, widely expressed. Highly expressed in testis, and moderately in pituitary, brain, eye and kidney.

It localises to the cytoplasm. The protein localises to the cytosol. The protein resides in the nucleus. It is found in the cytoskeleton. Its subcellular location is the spindle. It localises to the midbody. The catalysed reaction is gamma-L-glutamyl-L-glutamyl-[protein] + H2O = L-glutamyl-[protein] + L-glutamate. The enzyme catalyses (L-glutamyl)(n+1)-gamma-L-glutamyl-L-glutamyl-[protein] + H2O = (L-glutamyl)(n)-gamma-L-glutamyl-L-glutamyl-[protein] + L-glutamate. It carries out the reaction C-terminal L-alpha-aminoacyl-L-glutamyl-[tubulin] + H2O = C-terminal L-alpha-aminoacyl-[tubulin] + L-glutamate. It catalyses the reaction C-terminal L-alpha-aminoacyl-L-glutamyl-L-glutamyl-[tubulin] + H2O = C-terminal L-alpha-aminoacyl-L-glutamyl-[tubulin] + L-glutamate. In terms of biological role, metallocarboxypeptidase that mediates deglutamylation of tubulin and non-tubulin target proteins. Catalyzes the removal of polyglutamate side chains present on the gamma-carboxyl group of glutamate residues within the C-terminal tail of alpha- and beta-tubulin. Cleaves alpha- and gamma-linked polyglutamate tubulin side-chain, as well as the branching point glutamate. Also catalyzes the removal of alpha-linked glutamate residues from the carboxy-terminus of alpha-tubulin. Mediates deglutamylation of nucleotidyltransferase CGAS, leading to CGAS antiviral defense response activation. This Mus musculus (Mouse) protein is Cytosolic carboxypeptidase-like protein 5.